The chain runs to 481 residues: Betaine aldehyde dehydrogenase 2 (481 aa).

K(+)-binding residues include Ser-29 and Asp-96. Residue 152 to 154 coordinates NAD(+); it reads GAW. Lys-164 functions as the Charge relay system in the catalytic mechanism. Position 178-181 (178-181) interacts with NAD(+); sequence KPSE. Position 182 (Val-182) interacts with K(+). 231-234 is an NAD(+) binding site; the sequence is SVKT. Ile-246 is a K(+) binding site. Glu-252 (proton acceptor) is an active-site residue. Positions 254, 286, and 383 each coordinate NAD(+). Cys-286 (nucleophile) is an active-site residue. A Cysteine sulfenic acid (-SOH) modification is found at Cys-286. K(+) is bound by residues Lys-453 and Gly-456. Glu-460 serves as the catalytic Charge relay system.

This sequence belongs to the aldehyde dehydrogenase family. As to quaternary structure, dimer of dimers. The cofactor is K(+).

The enzyme catalyses betaine aldehyde + NAD(+) + H2O = glycine betaine + NADH + 2 H(+). It participates in amine and polyamine biosynthesis; betaine biosynthesis via choline pathway; betaine from betaine aldehyde: step 1/1. Functionally, involved in the biosynthesis of the osmoprotectant glycine betaine. Catalyzes the irreversible oxidation of betaine aldehyde to the corresponding acid. The sequence is that of Betaine aldehyde dehydrogenase 2 from Rhizobium meliloti (strain 1021) (Ensifer meliloti).